We begin with the raw amino-acid sequence, 80 residues long: RNA-binding protein Hfq (80 aa).

A Sm domain is found at 10–69; sequence DPFLNALRKEHVPVSIYLVNGIKLQGNIESFDQYVVLLRNTVTQMVYKHAISTVVPARPV.

Belongs to the Hfq family. In terms of assembly, homohexamer.

RNA chaperone that binds small regulatory RNA (sRNAs) and mRNAs to facilitate mRNA translational regulation in response to envelope stress, environmental stress and changes in metabolite concentrations. Also binds with high specificity to tRNAs. The polypeptide is RNA-binding protein Hfq (Burkholderia ambifaria (strain ATCC BAA-244 / DSM 16087 / CCUG 44356 / LMG 19182 / AMMD) (Burkholderia cepacia (strain AMMD))).